A 310-amino-acid chain; its full sequence is Ribosomal RNA small subunit methyltransferase H (310 aa).

S-adenosyl-L-methionine is bound by residues G32–H34, D52, A83, D100, and Q107.

Belongs to the methyltransferase superfamily. RsmH family.

The protein localises to the cytoplasm. It carries out the reaction cytidine(1402) in 16S rRNA + S-adenosyl-L-methionine = N(4)-methylcytidine(1402) in 16S rRNA + S-adenosyl-L-homocysteine + H(+). In terms of biological role, specifically methylates the N4 position of cytidine in position 1402 (C1402) of 16S rRNA. This is Ribosomal RNA small subunit methyltransferase H from Geobacillus sp. (strain WCH70).